Reading from the N-terminus, the 424-residue chain is PDZ and LIM domain protein 7 (424 aa).

A PDZ domain is found at 1–85 (MDSFKVVLEG…RLSLSLSRAQ (85 aa)). Phosphoserine is present on Ser-78. Over residues 81–98 (LSRAQPAQSKPQKVQTPD) the composition is skewed to polar residues. Positions 81–221 (LSRAQPAQSK…HTQPATPTPM (141 aa)) are disordered. At Thr-96 the chain carries Phosphothreonine. Basic and acidic residues predominate over residues 110-123 (SKQRLMEDTEDWRP). Residues 174 to 187 (EPWPGPTTPSPTSR) are compositionally biased toward pro residues. The segment covering 204–221 (KTSTVLTRHTQPATPTPM) has biased composition (polar residues). 3 LIM zinc-binding domains span residues 247-305 (PVCH…VRYA), 306-365 (PSCA…MFGT), and 366-424 (KCRG…FSHV).

In terms of assembly, binds via its LIM zinc-binding 3 domain (LIM 3) domain to endocytic codes of INSR, but not with those of IGF1R, LDLR, TFRC, or EGFR. Interacts with various PKC isoforms through the LIM zinc-binding domains. Binds to RET in a phosphorylation-independent manner via its LIM zinc-binding 2 domain (LIM 2). Probably part of a complex with SHC and the RET dimer. Interacts with TPM2, TBX4 and TBX5.

Its subcellular location is the cytoplasm. The protein resides in the cytoskeleton. May function as a scaffold on which the coordinated assembly of proteins can occur. May play a role as an adapter that, via its PDZ domain, localizes LIM-binding proteins to actin filaments of both skeletal muscle and nonmuscle tissues. Involved in both of the two fundamental mechanisms of bone formation, direct bone formation (e.g. embryonic flat bones mandible and cranium), and endochondral bone formation (e.g. embryonic long bone development). Plays a role during fracture repair. Involved in BMP6 signaling pathway. The polypeptide is PDZ and LIM domain protein 7 (PDLIM7) (Bos taurus (Bovine)).